Here is a 372-residue protein sequence, read N- to C-terminus: Alpha-parvin (372 aa).

A disordered region spans residues 1 to 31 (MATSPQKSPLVPKSPTPKSPPSRKKDDSFLG). At Ala-2 the chain carries N-acetylalanine. Phosphoserine is present on residues Ser-8, Ser-14, and Ser-19. The interaction with ARHGAP31 stretch occupies residues 21-25 (PSRKK). Phosphoserine is present on residues Ser-28 and Ser-62. 2 consecutive Calponin-homology (CH) domains span residues 95-202 (QELM…QYFR) and 262-369 (NVVK…TKYR). Residues 223–372 (GILQSRQIQE…NLFTKYRNVE (150 aa)) form a required for interaction with TESK1 and ILK region.

Belongs to the parvin family. As to quaternary structure, component of the heterotrimeric IPP (ILK-PINCH-PARVIN) complex composed of ILK, LIMS1/PINCH and PARVA; the complex binds to F-actin via the C-terminal tail of LIMS1 and the N-terminal region of PARVA, promoting F-actin filament bundling. Interacts with TGFB1I1. Interacts with ARHGAP31. Interacts with the actin cytoskeleton. Interacts (via C-terminus) with TESK1 (via C-terminus); the interaction inhibits TESK1 kinase activity. Interacts with PXN/PAXILLIN (via LD motif 4).

The protein resides in the cell junction. It is found in the focal adhesion. The protein localises to the cell membrane. It localises to the cytoplasm. Its subcellular location is the cytoskeleton. The protein resides in the myofibril. It is found in the sarcomere. The protein localises to the z line. Its function is as follows. Plays a role in sarcomere organization and in smooth muscle cell contraction. Required for normal development of the embryonic cardiovascular system, and for normal septation of the heart outflow tract. Plays a role in sprouting angiogenesis and is required for normal adhesion of vascular smooth muscle cells to endothelial cells during blood vessel development. Plays a role in the reorganization of the actin cytoskeleton, formation of lamellipodia and ciliogenesis. Plays a role in the establishment of cell polarity, cell adhesion, cell spreading, and directed cell migration. Within the IPP (ILK-PINCH-PARVIN) complex, binds to F-actin, promoting F-actin bundling, a process required to generate force for actin cytoskeleton reorganization and subsequent dynamic cell adhesion events such as cell spreading and migration. The protein is Alpha-parvin (Parva) of Mus musculus (Mouse).